Here is a 462-residue protein sequence, read N- to C-terminus: UDP-N-acetylmuramoylalanine--D-glutamate ligase (462 aa).

109–115 (GTDGKST) serves as a coordination point for ATP.

Belongs to the MurCDEF family.

Its subcellular location is the cytoplasm. The catalysed reaction is UDP-N-acetyl-alpha-D-muramoyl-L-alanine + D-glutamate + ATP = UDP-N-acetyl-alpha-D-muramoyl-L-alanyl-D-glutamate + ADP + phosphate + H(+). It participates in cell wall biogenesis; peptidoglycan biosynthesis. Its function is as follows. Cell wall formation. Catalyzes the addition of glutamate to the nucleotide precursor UDP-N-acetylmuramoyl-L-alanine (UMA). This Leptospira borgpetersenii serovar Hardjo-bovis (strain JB197) protein is UDP-N-acetylmuramoylalanine--D-glutamate ligase.